Here is a 79-residue protein sequence, read N- to C-terminus: RNA-binding protein Hfq (79 aa).

Positions 10–69 (GPFLNALRKEHVPVSIYLVNGIKLQGNIESFDQYVVLLRNTVTQMVYKHAISTVVPARAV) constitute a Sm domain.

Belongs to the Hfq family. Homohexamer.

Its function is as follows. RNA chaperone that binds small regulatory RNA (sRNAs) and mRNAs to facilitate mRNA translational regulation in response to envelope stress, environmental stress and changes in metabolite concentrations. Also binds with high specificity to tRNAs. The polypeptide is RNA-binding protein Hfq (Cupriavidus necator (strain ATCC 17699 / DSM 428 / KCTC 22496 / NCIMB 10442 / H16 / Stanier 337) (Ralstonia eutropha)).